The sequence spans 204 residues: Large ribosomal subunit protein eL15 (204 aa).

The protein belongs to the eukaryotic ribosomal protein eL15 family. In terms of assembly, component of the large ribosomal subunit.

The protein localises to the cytoplasm. In terms of biological role, component of the large ribosomal subunit. The ribosome is a large ribonucleoprotein complex responsible for the synthesis of proteins in the cell. The protein is Large ribosomal subunit protein eL15 (rpl15) of Hypophthalmichthys molitrix (Silver carp).